Reading from the N-terminus, the 284-residue chain is tRNA pseudouridine synthase B (284 aa).

The active-site Nucleophile is Asp40.

Belongs to the pseudouridine synthase TruB family. Type 1 subfamily.

The enzyme catalyses uridine(55) in tRNA = pseudouridine(55) in tRNA. Responsible for synthesis of pseudouridine from uracil-55 in the psi GC loop of transfer RNAs. This Helicobacter hepaticus (strain ATCC 51449 / 3B1) protein is tRNA pseudouridine synthase B.